We begin with the raw amino-acid sequence, 600 residues long: Tripeptidyl-peptidase 1 (600 aa).

The first 22 residues, 1-22, serve as a signal peptide directing secretion; it reads MNIKFNLIIIILFILFISNVNC. Positions 23–220 are cleaved as a propeptide — removed in mature form; that stretch reads KKIKNKKHLT…GGGGKVNGIG (198 aa). N-linked (GlcNAc...) asparagine glycosylation is found at N91, N259, and N266. The region spanning 248 to 600 is the Peptidase S53 domain; the sequence is YLSPDLIRKE…FDELVKYCLE (353 aa). Residues E318 and D322 each act as charge relay system in the active site. An intrachain disulfide couples C411 to C570. 2 N-linked (GlcNAc...) asparagine glycosylation sites follow: N475 and N483. The active-site Charge relay system is the S514. Ca(2+)-binding residues include D559, I560, G579, and D581.

In terms of assembly, monomer. Ca(2+) is required as a cofactor. Post-translationally, activated by autocatalytic proteolytical processing upon acidification. N-glycosylation is required for processing and activity.

It is found in the secreted. The enzyme catalyses Release of an N-terminal tripeptide from a polypeptide, but also has endopeptidase activity.. Serine protease with tripeptidyl-peptidase I activity. This chain is Tripeptidyl-peptidase 1 (tpp1), found in Dictyostelium discoideum (Social amoeba).